Here is a 255-residue protein sequence, read N- to C-terminus: Electron transfer flavoprotein beta subunit lysine methyltransferase (255 aa).

The transit peptide at Met-1 to Val-32 directs the protein to the mitochondrion.

It belongs to the methyltransferase superfamily. ETFBKMT family. In terms of assembly, interacts with HSPD1; this protein may possibly be a methylation substrate.

The protein resides in the cytoplasm. Its subcellular location is the mitochondrion matrix. It carries out the reaction L-lysyl-[protein] + 3 S-adenosyl-L-methionine = N(6),N(6),N(6)-trimethyl-L-lysyl-[protein] + 3 S-adenosyl-L-homocysteine + 3 H(+). Protein-lysine methyltransferase that selectively trimethylates the flavoprotein ETFB in mitochondria. Thereby, may negatively regulate the function of ETFB in electron transfer from Acyl-CoA dehydrogenases. This Mus musculus (Mouse) protein is Electron transfer flavoprotein beta subunit lysine methyltransferase.